We begin with the raw amino-acid sequence, 215 residues long: MKHFFITILLFCSVVSAARNGIDINSPVSTSTFTCIKNAGFSFIIPRIYHSSGSVDTVGVQNVKNARAAGLTDVDGYIFPCLKSTCASAANQVKASLDAVKAAGTKISTLWLDIERLNWPADHASNRAFIEAMVSEAKAYGQQVGIYSNYYNWQDIVGLDYHGQSSLMLWWPAYDGVKDFSKYAPFGGWSKPTIHQWSDTTTGPCGVSVDMNYIP.

Positions 1 to 17 (MKHFFITILLFCSVVSA) are cleaved as a signal peptide. One can recognise a Ch-type lysozyme domain in the interval 18-215 (ARNGIDINSP…GVSVDMNYIP (198 aa)). Active-site residues include aspartate 23, aspartate 113, and glutamate 115.

The protein belongs to the glycosyl hydrolase 25 family.

Functionally, plays a role in resistance to Gram-positive bacteria S.aureus or B.thuringiensis infection. This Caenorhabditis elegans protein is Lysozyme-like protein 5.